A 578-amino-acid chain; its full sequence is MRLWLRGLACQALRSSWGVCRIHTQPPPPPIPEVVATWEAISLGRQPVPEYFNFAHDVLDVWSQLEKTGHRPPNPAFWWVNGSGTEVKWTFEELGKQSRKAANVLEGVCGLQPGDRMMLVLPRLPDWWLISVACMRTGVVMIPGVSQLTAKDLKYRLQAARAKSIVTSDALAPQVDAISADCPSLQTKLLVSDTSRPGWINFRELLRAASPEHNCVRTRSGDSVAIYFTSGTTGAPKMVEHSQSSYGLGFVASGRRWMALTESDIFWNTTDTGWVKAAWTLFSAWSNGACIFVHELPRVDAKTILNTLCRFPITTLCCVPTLFRLLVQEDLTRYKFQCLRHCLTGGEALNPDVRDKWKSQTGLELHEGYGQSETVVICGNSRNSTIKSGSMGKASPPYDVQIVDEEGNVLPPGKEGNIAVRIKPTRPFCFFNCYLDNPEKTAASEQGDFYITGDRAHMDEDGYFWFLGRNDDVINSSSYRIGPVEVESALAEHPAVLESAVVSSPDPIRGEVVKAFIVLSPAYASHDPEALTRELQEHVKTVTAPYKYPRKVAFISELPKTVSGKILRSKLRNQEWGR.

The N-terminal 22 residues, Met-1–Ile-22, are a transit peptide targeting the mitochondrion. Lys-96 is modified (N6-acetyllysine; alternate). N6-succinyllysine; alternate is present on Lys-96. Lys-151 is modified (N6-acetyllysine). ATP is bound at residue Thr-229–Lys-237. Position 302 is an N6-acetyllysine; alternate (Lys-302). Residue Lys-302 is modified to N6-succinyllysine; alternate. Lys-335 carries the N6-acetyllysine modification. Residues Glu-367–Ser-372, Asp-454, Arg-469, and Lys-565 contribute to the ATP site.

It belongs to the ATP-dependent AMP-binding enzyme family. The cofactor is Mg(2+). Requires Mn(2+) as cofactor.

The protein localises to the mitochondrion matrix. The enzyme catalyses a medium-chain fatty acid + ATP + CoA = a medium-chain fatty acyl-CoA + AMP + diphosphate. Catalyzes the activation of fatty acids by CoA to produce an acyl-CoA, the first step in fatty acid metabolism. This is Acyl-coenzyme A synthetase ACSM5, mitochondrial (Acsm5) from Mus musculus (Mouse).